Consider the following 171-residue polypeptide: Large ribosomal subunit protein bL9 (171 aa).

The protein belongs to the bacterial ribosomal protein bL9 family.

Its function is as follows. Binds to the 23S rRNA. The polypeptide is Large ribosomal subunit protein bL9 (Rickettsia canadensis (strain McKiel)).